We begin with the raw amino-acid sequence, 95 residues long: Co-chaperonin GroES (95 aa).

Belongs to the GroES chaperonin family. Heptamer of 7 subunits arranged in a ring. Interacts with the chaperonin GroEL.

The protein resides in the cytoplasm. Its function is as follows. Together with the chaperonin GroEL, plays an essential role in assisting protein folding. The GroEL-GroES system forms a nano-cage that allows encapsulation of the non-native substrate proteins and provides a physical environment optimized to promote and accelerate protein folding. GroES binds to the apical surface of the GroEL ring, thereby capping the opening of the GroEL channel. The chain is Co-chaperonin GroES from Ruthia magnifica subsp. Calyptogena magnifica.